A 303-amino-acid polypeptide reads, in one-letter code: Pyridoxal 5'-phosphate synthase subunit PdxS (303 aa).

D-ribose 5-phosphate is bound at residue Asp-33. The Schiff-base intermediate with D-ribose 5-phosphate role is filled by Lys-90. D-ribose 5-phosphate is bound at residue Gly-162. Arg-174 serves as a coordination point for D-glyceraldehyde 3-phosphate. D-ribose 5-phosphate-binding positions include Gly-223 and 244–245; that span reads GS.

This sequence belongs to the PdxS/SNZ family. In the presence of PdxT, forms a dodecamer of heterodimers.

The catalysed reaction is aldehydo-D-ribose 5-phosphate + D-glyceraldehyde 3-phosphate + L-glutamine = pyridoxal 5'-phosphate + L-glutamate + phosphate + 3 H2O + H(+). Its pathway is cofactor biosynthesis; pyridoxal 5'-phosphate biosynthesis. Its function is as follows. Catalyzes the formation of pyridoxal 5'-phosphate from ribose 5-phosphate (RBP), glyceraldehyde 3-phosphate (G3P) and ammonia. The ammonia is provided by the PdxT subunit. Can also use ribulose 5-phosphate and dihydroxyacetone phosphate as substrates, resulting from enzyme-catalyzed isomerization of RBP and G3P, respectively. The polypeptide is Pyridoxal 5'-phosphate synthase subunit PdxS (Mycobacterium avium (strain 104)).